The chain runs to 355 residues: 3-dehydroquinate synthase (355 aa).

Residues 66-71 (SGETTK), 100-104 (GATGD), 124-125 (TT), lysine 136, lysine 145, and 163-166 (FLET) contribute to the NAD(+) site. Zn(2+) is bound by residues glutamate 178, histidine 242, and histidine 256.

The protein belongs to the sugar phosphate cyclases superfamily. Dehydroquinate synthase family. Co(2+) is required as a cofactor. Requires Zn(2+) as cofactor. The cofactor is NAD(+).

The protein localises to the cytoplasm. It carries out the reaction 7-phospho-2-dehydro-3-deoxy-D-arabino-heptonate = 3-dehydroquinate + phosphate. It functions in the pathway metabolic intermediate biosynthesis; chorismate biosynthesis; chorismate from D-erythrose 4-phosphate and phosphoenolpyruvate: step 2/7. Functionally, catalyzes the conversion of 3-deoxy-D-arabino-heptulosonate 7-phosphate (DAHP) to dehydroquinate (DHQ). The chain is 3-dehydroquinate synthase from Staphylococcus saprophyticus subsp. saprophyticus (strain ATCC 15305 / DSM 20229 / NCIMB 8711 / NCTC 7292 / S-41).